A 417-amino-acid polypeptide reads, in one-letter code: Cyanophycinase (417 aa).

The first 23 residues, 1 to 23, serve as a signal peptide directing secretion; that stretch reads MIRSFIRSSALLLALLPVTGYSA. Active-site charge relay system residues include serine 169, aspartate 188, and histidine 222.

This sequence belongs to the peptidase S51 family.

It is found in the secreted. The catalysed reaction is [L-4-(L-arginin-2-N-yl)aspartate](n) + H2O = [L-4-(L-arginin-2-N-yl)aspartate](n-1) + L-4-(L-arginin-2-N-yl)aspartate. Its activity is regulated as follows. Inhibited by serine protease inhibitors. Inhibited by N-Bromo-succinimide. Functionally, exopeptidase that catalyzes the hydrolytic cleavage of multi-L-arginyl-poly-L-aspartic acid (cyanophycin; a water-insoluble reserve polymer) into aspartate-arginine dipeptides. The sequence is that of Cyanophycinase (cphE) from Pseudomonas anguilliseptica.